Consider the following 450-residue polypeptide: Phosphoglucosamine mutase (450 aa).

The active-site Phosphoserine intermediate is the Ser-101. The Mg(2+) site is built by Ser-101, Asp-240, Asp-242, and Asp-244. Ser-101 is subject to Phosphoserine.

This sequence belongs to the phosphohexose mutase family. The cofactor is Mg(2+). Activated by phosphorylation.

It carries out the reaction alpha-D-glucosamine 1-phosphate = D-glucosamine 6-phosphate. Its function is as follows. Catalyzes the conversion of glucosamine-6-phosphate to glucosamine-1-phosphate. The sequence is that of Phosphoglucosamine mutase from Streptococcus equi subsp. zooepidemicus (strain H70).